A 310-amino-acid polypeptide reads, in one-letter code: N-acyl-aromatic-L-amino acid amidohydrolase (carboxylate-forming) (310 aa).

The Zn(2+) site is built by His-20 and Glu-23. Residues Arg-62 and 69 to 70 each bind substrate; that span reads NR. Position 113 (His-113) interacts with Zn(2+). Residues Glu-176 and Tyr-286 each coordinate substrate.

The protein belongs to the AspA/AstE family. Aspartoacylase subfamily. In terms of assembly, homotetramer. The cofactor is Zn(2+).

Its subcellular location is the apical cell membrane. The protein localises to the cytoplasm. The enzyme catalyses an N-acyl-aromatic L-alpha-amino acid + H2O = an aromatic L-alpha-amino acid + a carboxylate. It catalyses the reaction an N-acetyl-L-cysteine-S-conjugate + H2O = an S-substituted L-cysteine + acetate. Plays an important role in deacetylating mercapturic acids in kidney proximal tubules. The sequence is that of N-acyl-aromatic-L-amino acid amidohydrolase (carboxylate-forming) (acy3) from Xenopus tropicalis (Western clawed frog).